The following is a 351-amino-acid chain: Dysbindin (351 aa).

Ser-11 carries the post-translational modification Phosphoserine. Residues 88–181 (EKKKTSLVEL…ELDAEHAQKV (94 aa)) are a coiled coil. The dysbindin stretch occupies residues 173 to 331 (LDAEHAQKVL…DEEEVQVDTA (159 aa)). The short motif at 243 to 256 (LMDISDQEALDVFL) is the Nuclear export signal element. The interval 286–351 (PNPSELRAKP…TPDGGEDSDS (66 aa)) is disordered. A compositionally biased stretch (polar residues) spans 296 to 305 (PSSSSTCTDS). A phosphoserine mark is found at Ser-316, Ser-321, and Ser-349.

It belongs to the dysbindin family. In terms of assembly, interacts (via its coiled coil domain) with KXD1. Interacts with CMYA5, PI4K2 and RNF151. Component of the biogenesis of lysosome-related organelles complex 1 (BLOC-1) composed of at least BLOC1S1, BLOC1S2, BLOC1S3, BLOC1S4, BLOC1S5, BLOC1S6, DTNBP1/BLOC1S7 and SNAPIN/BLOC1S8. Interacts directly in the complex with BLOC1S5, BLOC1S6 and SNAPIN/BLOC1S8. The BLOC-1 complex associates with the AP-3 protein complex and membrane protein cargos. This BLOC-1 complex also associates with the BLOC-2 complex in endosomes. Binds to DTNA and DTNB but may not be a physiological binding partner. Interacts (isoform 1 and isoform 2 only) with the DNA-dependent protein kinase complex DNA-PK; the interaction phosphorylates DTNBP1 in vitro. Interacts directly in this complex with XRCC5 and XRCC6. Interacts with AP3M1, AP3B2 and TRIM32. Interacts with XPO1; the interaction exports DTNBP1 out of the nucleus. Ubiquitinated by TRIM32. Ubiquitination leads to DTNBP1 degradation. In terms of processing, isoforms 1 and 2 highly phosphorylated by PRKDC in vitro. Isoform 3 only weakly phosphorylated by PRKDC in vitro. As to expression, detected in brain, in neurons and in neuropil. Isoform 1 is expressed in the cerebral cortex, and hippocampal frontal (HF). Specific expression in the posterior half of the superior temporal gyrus (pSTG). Higher expression of isoform 2 and 3 in the HF than in the pSTG while isoform 1 shows no difference in expression in these areas. In the HF, detected in dentate gyrus (DG) and in pyramidal cells of hippocampus CA2 and CA3 (at protein level). Expressed in all principal neuronal populations of the HF, namely pyramidal neurons in the subiculum and CA1-3, granule cells in the dense cell layer of the DG (DGg), and polymorph cells in the hilus of the DG (DGh). Maximal levels in CA2, CA3, and DGh. Isoform 2 not expressed in the cerebral cortex.

The protein localises to the cytoplasm. Its subcellular location is the cytoplasmic vesicle membrane. The protein resides in the endosome membrane. It is found in the melanosome membrane. It localises to the postsynaptic density. The protein localises to the endoplasmic reticulum. Its subcellular location is the nucleus. The protein resides in the cytoplasmic vesicle. It is found in the secretory vesicle. It localises to the synaptic vesicle membrane. The protein localises to the postsynaptic cell membrane. Its function is as follows. Component of the BLOC-1 complex, a complex that is required for normal biogenesis of lysosome-related organelles (LRO), such as platelet dense granules and melanosomes. In concert with the AP-3 complex, the BLOC-1 complex is required to target membrane protein cargos into vesicles assembled at cell bodies for delivery into neurites and nerve terminals. The BLOC-1 complex, in association with SNARE proteins, is also proposed to be involved in neurite extension. Associates with the BLOC-2 complex to facilitate the transport of TYRP1 independent of AP-3 function. Plays a role in synaptic vesicle trafficking and in neurotransmitter release. Plays a role in the regulation of cell surface exposure of DRD2. May play a role in actin cytoskeleton reorganization and neurite outgrowth. May modulate MAPK8 phosphorylation. Appears to promote neuronal transmission and viability through regulating the expression of SNAP25 and SYN1, modulating PI3-kinase-Akt signaling and influencing glutamatergic release. Regulates the expression of SYN1 through binding to its promoter. Modulates prefrontal cortical activity via the dopamine/D2 pathway. This Homo sapiens (Human) protein is Dysbindin (DTNBP1).